The chain runs to 23 residues: Superoxide dismutase [Mn], mitochondrial (23 aa).

It belongs to the iron/manganese superoxide dismutase family. Homotetramer. Requires Mn(2+) as cofactor.

Its subcellular location is the mitochondrion matrix. It carries out the reaction 2 superoxide + 2 H(+) = H2O2 + O2. Functionally, destroys superoxide anion radicals which are normally produced within the cells and which are toxic to biological systems. This Aquarana catesbeiana (American bullfrog) protein is Superoxide dismutase [Mn], mitochondrial.